Consider the following 342-residue polypeptide: Large ribosomal subunit protein uL3 (342 aa).

The protein belongs to the universal ribosomal protein uL3 family. In terms of assembly, part of the 50S ribosomal subunit. Forms a cluster with proteins L14 and L24e.

In terms of biological role, one of the primary rRNA binding proteins, it binds directly near the 3'-end of the 23S rRNA, where it nucleates assembly of the 50S subunit. In Pyrobaculum islandicum (strain DSM 4184 / JCM 9189 / GEO3), this protein is Large ribosomal subunit protein uL3.